The chain runs to 516 residues: Propionyl-CoA carboxylase, carboxyltransferase subunit (516 aa).

The interval M1–K32 is disordered. Residues M3–E259 enclose the CoA carboxyltransferase N-terminal domain. Positions D263 to K509 constitute a CoA carboxyltransferase C-terminal domain.

This sequence belongs to the AccD/PCCB family. As to quaternary structure, the propionyl coenzyme A carboxylase (PCC) complex is composed of three subunits: PccA (biotin carboxylase and biotin-carboxyl carrier), PccB (carboxyltransferase) and PccX.

The catalysed reaction is propanoyl-CoA + hydrogencarbonate + ATP = (S)-methylmalonyl-CoA + ADP + phosphate + H(+). Its pathway is metabolic intermediate metabolism; propanoyl-CoA degradation; succinyl-CoA from propanoyl-CoA: step 1/3. In terms of biological role, part of the propionyl coenzyme A carboxylase (PCC) complex involved in propionate utilization and in the production of the poly(3-hydroxybutyrate-co-3-hydroxyvalerate)(PHBV), which is a water-insoluble biopolymer used as intracellular energy reserve material when cells grow under conditions of nutrient limitation. The complex catalyzes the carboxylation of propionyl-CoA to methylmalonyl-CoA. PCC is also able to catalyze the carboxylation of acetyl-CoA. The protein is Propionyl-CoA carboxylase, carboxyltransferase subunit of Haloferax mediterranei (strain ATCC 33500 / DSM 1411 / JCM 8866 / NBRC 14739 / NCIMB 2177 / R-4) (Halobacterium mediterranei).